Reading from the N-terminus, the 378-residue chain is O-glycoside alpha-1,2-mannosyltransferase homolog 3 (378 aa).

Residues 1-6 (MGIPKS) are Cytoplasmic-facing. The chain crosses the membrane as a helical; Signal-anchor for type II membrane protein span at residues 7-24 (SIYFCILLFCIISFYLQS). Residues 25–378 (SKDGPKELKV…AIKWLENINS (354 aa)) are Lumenal-facing. Glutamate 276 functions as the Nucleophile in the catalytic mechanism.

This sequence belongs to the glycosyltransferase 15 family.

Its subcellular location is the endoplasmic reticulum membrane. The protein localises to the golgi apparatus membrane. In terms of biological role, probable mannosyltransferase involved in O-glycosylation of cell wall and secreted proteins. The chain is O-glycoside alpha-1,2-mannosyltransferase homolog 3 (omh3) from Schizosaccharomyces pombe (strain 972 / ATCC 24843) (Fission yeast).